Here is a 498-residue protein sequence, read N- to C-terminus: Serine hydroxymethyltransferase, mitochondrial (498 aa).

Lysine 273 is subject to N6-(pyridoxal phosphate)lysine.

It belongs to the SHMT family. Homotetramer. Requires pyridoxal 5'-phosphate as cofactor.

It is found in the mitochondrion. The enzyme catalyses (6R)-5,10-methylene-5,6,7,8-tetrahydrofolate + glycine + H2O = (6S)-5,6,7,8-tetrahydrofolate + L-serine. The protein operates within one-carbon metabolism; tetrahydrofolate interconversion. In terms of biological role, interconversion of serine and glycine. The protein is Serine hydroxymethyltransferase, mitochondrial (SHM1) of Kluyveromyces lactis (strain ATCC 8585 / CBS 2359 / DSM 70799 / NBRC 1267 / NRRL Y-1140 / WM37) (Yeast).